The chain runs to 367 residues: Glutamate 5-kinase (367 aa).

Residue lysine 10 coordinates ATP. Positions 50, 137, and 149 each coordinate substrate. ATP contacts are provided by residues 169–170 and 211–217; these read TD and TGGMGTK. In terms of domain architecture, PUA spans 275 to 353; that stretch reads AGEITVDEGA…QQIDAILGYE (79 aa).

Belongs to the glutamate 5-kinase family.

It localises to the cytoplasm. It carries out the reaction L-glutamate + ATP = L-glutamyl 5-phosphate + ADP. It functions in the pathway amino-acid biosynthesis; L-proline biosynthesis; L-glutamate 5-semialdehyde from L-glutamate: step 1/2. Functionally, catalyzes the transfer of a phosphate group to glutamate to form L-glutamate 5-phosphate. The polypeptide is Glutamate 5-kinase (Enterobacter sp. (strain 638)).